Reading from the N-terminus, the 495-residue chain is Aspartyl/glutamyl-tRNA(Asn/Gln) amidotransferase subunit B (495 aa).

It belongs to the GatB/GatE family. GatB subfamily. Heterotrimer of A, B and C subunits.

The catalysed reaction is L-glutamyl-tRNA(Gln) + L-glutamine + ATP + H2O = L-glutaminyl-tRNA(Gln) + L-glutamate + ADP + phosphate + H(+). It catalyses the reaction L-aspartyl-tRNA(Asn) + L-glutamine + ATP + H2O = L-asparaginyl-tRNA(Asn) + L-glutamate + ADP + phosphate + 2 H(+). In terms of biological role, allows the formation of correctly charged Asn-tRNA(Asn) or Gln-tRNA(Gln) through the transamidation of misacylated Asp-tRNA(Asn) or Glu-tRNA(Gln) in organisms which lack either or both of asparaginyl-tRNA or glutaminyl-tRNA synthetases. The reaction takes place in the presence of glutamine and ATP through an activated phospho-Asp-tRNA(Asn) or phospho-Glu-tRNA(Gln). The protein is Aspartyl/glutamyl-tRNA(Asn/Gln) amidotransferase subunit B of Halobacterium salinarum (strain ATCC 700922 / JCM 11081 / NRC-1) (Halobacterium halobium).